The sequence spans 552 residues: Chaperonin GroEL (552 aa).

ATP contacts are provided by residues 30–33 (TLGP), Lys51, 87–91 (DGTTT), Gly415, 479–481 (NAA), and Asp495.

It belongs to the chaperonin (HSP60) family. Forms a cylinder of 14 subunits composed of two heptameric rings stacked back-to-back. Interacts with the co-chaperonin GroES.

The protein resides in the cytoplasm. It carries out the reaction ATP + H2O + a folded polypeptide = ADP + phosphate + an unfolded polypeptide.. Together with its co-chaperonin GroES, plays an essential role in assisting protein folding. The GroEL-GroES system forms a nano-cage that allows encapsulation of the non-native substrate proteins and provides a physical environment optimized to promote and accelerate protein folding. This chain is Chaperonin GroEL, found in Stutzerimonas stutzeri (Pseudomonas stutzeri).